The primary structure comprises 244 residues: Ribonuclease 3 2 (244 aa).

The RNase III domain maps to 11 to 136 (LKALLRRLGL…LLGALYLSVG (126 aa)). Position 50 (Glu-50) interacts with Mg(2+). Asp-54 is an active-site residue. The Mg(2+) site is built by Asp-122 and Glu-125. Glu-125 is an active-site residue. A DRBM domain is found at 164–234 (NYKEALQAWT…AQQAYQDFIA (71 aa)).

Belongs to the ribonuclease III family. In terms of assembly, homodimer. It depends on Mg(2+) as a cofactor.

The protein resides in the cytoplasm. The catalysed reaction is Endonucleolytic cleavage to 5'-phosphomonoester.. Digests double-stranded RNA. Involved in the processing of primary rRNA transcript to yield the immediate precursors to the large and small rRNAs (23S and 16S). Processes some mRNAs, and tRNAs when they are encoded in the rRNA operon. Processes pre-crRNA and tracrRNA of type II CRISPR loci if present in the organism. The chain is Ribonuclease 3 2 from Synechocystis sp. (strain ATCC 27184 / PCC 6803 / Kazusa).